Reading from the N-terminus, the 443-residue chain is Magnesium transporter MRS2-10 (443 aa).

Positions 1–33 are disordered; that stretch reads MSELKERLLPPRPASAINLRGDAGSRPSPSGRQ. The next 2 helical transmembrane spans lie at 379–399 and 415–435; these read LLLT…GIFG and WVLA…LWYY. A Required for magnesium transport activity motif is present at residues 399–401; the sequence is GMN.

The protein belongs to the CorA metal ion transporter (MIT) (TC 1.A.35.5) family. Expressed in the whole plant.

The protein localises to the cell membrane. Its function is as follows. High-affinity magnesium transporter that mediates the influx of magnesium. Involved in tolerance to Aluminum. This is Magnesium transporter MRS2-10 (MRS2-10) from Arabidopsis thaliana (Mouse-ear cress).